A 502-amino-acid chain; its full sequence is Lysine--tRNA ligase (502 aa).

Glutamate 412 and glutamate 419 together coordinate Mg(2+).

The protein belongs to the class-II aminoacyl-tRNA synthetase family. In terms of assembly, homodimer. Requires Mg(2+) as cofactor.

It is found in the cytoplasm. The catalysed reaction is tRNA(Lys) + L-lysine + ATP = L-lysyl-tRNA(Lys) + AMP + diphosphate. This chain is Lysine--tRNA ligase, found in Nitrosomonas europaea (strain ATCC 19718 / CIP 103999 / KCTC 2705 / NBRC 14298).